The sequence spans 258 residues: Type III pantothenate kinase (258 aa).

ATP is bound at residue 6-13; the sequence is DVGNTNIV. Residues Tyr100 and 107-110 contribute to the substrate site; that span reads GADR. Asp109 serves as the catalytic Proton acceptor. Asp129 is a K(+) binding site. ATP is bound at residue Thr132. Thr184 provides a ligand contact to substrate.

This sequence belongs to the type III pantothenate kinase family. In terms of assembly, homodimer. NH4(+) serves as cofactor. Requires K(+) as cofactor.

It localises to the cytoplasm. The catalysed reaction is (R)-pantothenate + ATP = (R)-4'-phosphopantothenate + ADP + H(+). Its pathway is cofactor biosynthesis; coenzyme A biosynthesis; CoA from (R)-pantothenate: step 1/5. Its function is as follows. Catalyzes the phosphorylation of pantothenate (Pan), the first step in CoA biosynthesis. The chain is Type III pantothenate kinase from Desulfitobacterium hafniense (strain DSM 10664 / DCB-2).